The primary structure comprises 354 residues: MSLPLPSFLSSNNYNSSETSLLTEGPESDEEDEGPLLKQYRLKNMLGYGACSTVYLAVDVSTNIEYAIKEFKKTSLRRREKFRLMQLEKELGSFNDMDSSTIEDQIRNQEKKDPYYYIRKELDVLKVLDHENVVKLYQVINSDYKDSLCMVLNYCPGGKLASVDHGISFDPMPLETCRKSFRQLVLAVNYIHGKGVIHRDIKPDNILFKENNNLCVIDFGLAEFLPKDGFVKPASGTPAFMAPELFDNELKKIKGKPLDIWSMGVTLYVIAFAEFPFNGSTILDMINVIKGKSLMIPAYCNSDLRKLLERCLEKNPEKRITIEELLRDPFLTERGKHHLTSSSIVTAFSSIWEI.

The Protein kinase domain occupies Y40–L331. ATP-binding positions include L46 to V54 and K69. The active-site Proton acceptor is the D200.

This sequence belongs to the protein kinase superfamily. Ser/Thr protein kinase family.

It is found in the cytoplasm. The protein resides in the nucleus. The enzyme catalyses L-seryl-[protein] + ATP = O-phospho-L-seryl-[protein] + ADP + H(+). It catalyses the reaction L-threonyl-[protein] + ATP = O-phospho-L-threonyl-[protein] + ADP + H(+). The sequence is that of Serine/threonine-protein kinase ppk34 (ppk34) from Schizosaccharomyces pombe (strain 972 / ATCC 24843) (Fission yeast).